Reading from the N-terminus, the 103-residue chain is Large ribosomal subunit protein uL24 (103 aa).

Belongs to the universal ribosomal protein uL24 family. As to quaternary structure, part of the 50S ribosomal subunit.

In terms of biological role, one of two assembly initiator proteins, it binds directly to the 5'-end of the 23S rRNA, where it nucleates assembly of the 50S subunit. One of the proteins that surrounds the polypeptide exit tunnel on the outside of the subunit. This is Large ribosomal subunit protein uL24 from Endomicrobium trichonymphae.